The following is a 187-amino-acid chain: Bifunctional protein PyrR (187 aa).

A PRPP-binding motif is present at residues 109–121 (VILVDDVLYSGRS).

Belongs to the purine/pyrimidine phosphoribosyltransferase family. PyrR subfamily.

It carries out the reaction UMP + diphosphate = 5-phospho-alpha-D-ribose 1-diphosphate + uracil. Regulates the transcription of the pyrimidine nucleotide (pyr) operon in response to exogenous pyrimidines. Its function is as follows. Also displays a weak uracil phosphoribosyltransferase activity which is not physiologically significant. In Mycobacterium ulcerans (strain Agy99), this protein is Bifunctional protein PyrR.